Reading from the N-terminus, the 307-residue chain is MIKNGRIVKSLAGFYDVESEGEVYQTRARGNFRKKGMKPVVGDFVEFSTEENSEGYILKIGERKNSLIRPSIANIDQAVIIMSTVSPNFSLNLLDRFLVFLEHKNIHPMIYISKLDLLTEMQEGSDKNKKTFNQLTDYEQIKSDYEQIGYDVFFDAEHLVSNLAGKVTVFMGQTGAGKTTLLNKIAPEMQLATGETSEKLGRGRHTTRHVEFFELAGGLIADTPGFSSLDYEVTNRPDLNAAFPEILRISHDCKFRECTHTHEPSCAVKLALENHEILESRYDNYLQILDEINHTRETYEKKRKKQG.

The CP-type G domain occupies 64 to 229; the sequence is KNSLIRPSIA…IADTPGFSSL (166 aa). Residues 113 to 116 and 172 to 180 each bind GTP; these read SKLD and GQTGAGKTT. Zn(2+) contacts are provided by cysteine 253, cysteine 258, histidine 260, and cysteine 266.

It belongs to the TRAFAC class YlqF/YawG GTPase family. RsgA subfamily. As to quaternary structure, monomer. Associates with 30S ribosomal subunit, binds 16S rRNA. It depends on Zn(2+) as a cofactor.

Its subcellular location is the cytoplasm. Functionally, one of several proteins that assist in the late maturation steps of the functional core of the 30S ribosomal subunit. Helps release RbfA from mature subunits. May play a role in the assembly of ribosomal proteins into the subunit. Circularly permuted GTPase that catalyzes slow GTP hydrolysis, GTPase activity is stimulated by the 30S ribosomal subunit. This is Small ribosomal subunit biogenesis GTPase RsgA from Lactococcus lactis subsp. lactis (strain IL1403) (Streptococcus lactis).